Reading from the N-terminus, the 913-residue chain is Chitin synthase 1 (913 aa).

Residues 1–135 (MAYRGGGPND…QQPGAQTGGL (135 aa)) form a disordered region. The N-linked (GlcNAc...) asparagine glycan is linked to asparagine 25. Positions 41–56 (RDPHARGTSPYEHHLG) are enriched in basic and acidic residues. Asparagine 539 carries an N-linked (GlcNAc...) asparagine glycan. 7 helical membrane passes run 566-586 (FFFHIQLIYNVLNVIFTWFSL), 625-645 (IINSILQYLYLAFLVIQFVLA), 658-678 (IASFIVFGFIQTYILVLSGYL), 712-732 (VILVALVTIYGLNFIASFMYL), 740-760 (SFPYYLVLMSTYINILMVYAF), 840-860 (TGLVVSWLFSNAALIVFITTD), and 881-901 (FLLYSTAVLALVRFTGFLWFL).

Belongs to the chitin synthase family. Class III subfamily.

Its subcellular location is the cell membrane. It carries out the reaction [(1-&gt;4)-N-acetyl-beta-D-glucosaminyl](n) + UDP-N-acetyl-alpha-D-glucosamine = [(1-&gt;4)-N-acetyl-beta-D-glucosaminyl](n+1) + UDP + H(+). Its function is as follows. Polymerizes chitin, a structural polymer of the cell wall and septum, by transferring the sugar moiety of UDP-GlcNAc to the non-reducing end of the growing chitin polymer. Plays a role in cell wall integrity and is involved in tolerance to hyperosmotic conditions. Required to successfully penetrate the host plants and thus plays a key role in pathogenicity. The sequence is that of Chitin synthase 1 from Verticillium dahliae (strain VdLs.17 / ATCC MYA-4575 / FGSC 10137) (Verticillium wilt).